Here is a 219-residue protein sequence, read N- to C-terminus: MNQILLSDFGTPMERVERALSALRDGRGVMVLDDENRENEGDMIFAAEKMTVEQMALTIRHGSGIVCLCITEARRQQLDLPMMVSNNTSHYGTAFTVTIEAAEGVTTGVSAQDRLTTVRAAIADDAKPGDLHRPGHVFPLRARPGGVLARRGHTEATIDLVSLAGFRPAGVLCELTNDDGTMARAPQVMAFARQHEMPVVTIEDLVAYRQAREPQEQAD.

D-ribulose 5-phosphate is bound by residues 37–38 (RE), Asp42, 150–154 (RRGHT), and Glu174. Glu38 contributes to the Mg(2+) binding site. A Mg(2+)-binding site is contributed by His153.

This sequence belongs to the DHBP synthase family. Homodimer. Requires Mg(2+) as cofactor. It depends on Mn(2+) as a cofactor.

It carries out the reaction D-ribulose 5-phosphate = (2S)-2-hydroxy-3-oxobutyl phosphate + formate + H(+). It participates in cofactor biosynthesis; riboflavin biosynthesis; 2-hydroxy-3-oxobutyl phosphate from D-ribulose 5-phosphate: step 1/1. Functionally, catalyzes the conversion of D-ribulose 5-phosphate to formate and 3,4-dihydroxy-2-butanone 4-phosphate. In Edwardsiella ictaluri (strain 93-146), this protein is 3,4-dihydroxy-2-butanone 4-phosphate synthase.